The primary structure comprises 185 residues: Elongation factor P (185 aa).

It belongs to the elongation factor P family.

The protein resides in the cytoplasm. Its pathway is protein biosynthesis; polypeptide chain elongation. Functionally, involved in peptide bond synthesis. Stimulates efficient translation and peptide-bond synthesis on native or reconstituted 70S ribosomes in vitro. Probably functions indirectly by altering the affinity of the ribosome for aminoacyl-tRNA, thus increasing their reactivity as acceptors for peptidyl transferase. This Cyanothece sp. (strain PCC 7425 / ATCC 29141) protein is Elongation factor P.